Here is a 102-residue protein sequence, read N- to C-terminus: NADH-quinone oxidoreductase subunit K (102 aa).

3 consecutive transmembrane segments (helical) span residues 4–24 (IGLNHYLVLSTILFAIGLVGV), 31–51 (LMLFFATEILLNSVNISFAAI), and 65–85 (FFVIAIAASEVAVGLGLLIVW).

It belongs to the complex I subunit 4L family. In terms of assembly, NDH-1 is composed of 14 different subunits. Subunits NuoA, H, J, K, L, M, N constitute the membrane sector of the complex.

The protein localises to the cell inner membrane. It carries out the reaction a quinone + NADH + 5 H(+)(in) = a quinol + NAD(+) + 4 H(+)(out). In terms of biological role, NDH-1 shuttles electrons from NADH, via FMN and iron-sulfur (Fe-S) centers, to quinones in the respiratory chain. The immediate electron acceptor for the enzyme in this species is believed to be ubiquinone. Couples the redox reaction to proton translocation (for every two electrons transferred, four hydrogen ions are translocated across the cytoplasmic membrane), and thus conserves the redox energy in a proton gradient. This chain is NADH-quinone oxidoreductase subunit K, found in Sulfurimonas denitrificans (strain ATCC 33889 / DSM 1251) (Thiomicrospira denitrificans (strain ATCC 33889 / DSM 1251)).